Here is a 207-residue protein sequence, read N- to C-terminus: Large ribosomal subunit protein uL3 (207 aa).

This sequence belongs to the universal ribosomal protein uL3 family. As to quaternary structure, part of the 50S ribosomal subunit. Forms a cluster with proteins L14 and L19.

One of the primary rRNA binding proteins, it binds directly near the 3'-end of the 23S rRNA, where it nucleates assembly of the 50S subunit. This Desulforapulum autotrophicum (strain ATCC 43914 / DSM 3382 / VKM B-1955 / HRM2) (Desulfobacterium autotrophicum) protein is Large ribosomal subunit protein uL3.